A 166-amino-acid chain; its full sequence is Large ribosomal subunit protein uL10 (166 aa).

Belongs to the universal ribosomal protein uL10 family. Part of the ribosomal stalk of the 50S ribosomal subunit. The N-terminus interacts with L11 and the large rRNA to form the base of the stalk. The C-terminus forms an elongated spine to which L12 dimers bind in a sequential fashion forming a multimeric L10(L12)X complex.

In terms of biological role, forms part of the ribosomal stalk, playing a central role in the interaction of the ribosome with GTP-bound translation factors. The chain is Large ribosomal subunit protein uL10 from Streptococcus pneumoniae (strain ATCC 700669 / Spain 23F-1).